A 283-amino-acid chain; its full sequence is 2-hydroxymuconate semialdehyde hydrolase (283 aa).

Positions 32-262 (LMMIHGSGPG…QCGHWTQIEH (231 aa)) constitute an AB hydrolase-1 domain. Catalysis depends on residues Ser-107, Asp-228, and His-256.

This sequence belongs to the DmpD/TodF/XylF esterase family.

The enzyme catalyses (2Z,4E)-2-hydroxy-6-oxohexa-2,4-dienoate + H2O = 2-oxopent-4-enoate + formate + H(+). It participates in aromatic compound metabolism; benzoate degradation via hydroxylation. Its function is as follows. Catalyzes the conversion of 2-hydroxymuconate semialdehyde to 2-hydroxypent-2,4-dienoate. In Pseudomonas sp. (strain CF600), this protein is 2-hydroxymuconate semialdehyde hydrolase (dmpD).